A 189-amino-acid polypeptide reads, in one-letter code: MMKSDGNCQFRALADQLYQNSDCHELVRQEIVKQNMSLSTNSQWGDEVTLRVAADVYQVKIILITSIKLIPFMEFLPKSQKEPDKVIHMSYLAGIHFNSIYKKNKEKGSRSSSSSSSAVWMKLQRKKENEAKKKEEEEKERKDMEKEEKKKDKEDKKKDKEDKKKAKVQKEKKEKKEKKNRNHHFHYSE.

The region spanning 1–103 is the OTU domain; that stretch reads MMKSDGNCQF…GIHFNSIYKK (103 aa). Asp5 is an active-site residue. Catalysis depends on Cys8, which acts as the Nucleophile. The active site involves His96. Residues 105–189 are disordered; it reads KEKGSRSSSS…NRNHHFHYSE (85 aa). Residues 120–181 are a coiled coil; sequence WMKLQRKKEN…KKEKKEKKNR (62 aa). Short sequence motifs (nuclear localization signal) lie at residues 125 to 132 and 163 to 170; these read RKKENEAK and KKKAKVQK. The span at 126 to 174 shows a compositional bias: basic and acidic residues; that stretch reads KKENEAKKKEEEEKERKDMEKEEKKKDKEDKKKDKEDKKKAKVQKEKKE. The segment covering 175-189 has biased composition (basic residues); the sequence is KKEKKNRNHHFHYSE.

This sequence belongs to the peptidase C85 family.

The protein resides in the nucleus. It carries out the reaction Thiol-dependent hydrolysis of ester, thioester, amide, peptide and isopeptide bonds formed by the C-terminal Gly of ubiquitin (a 76-residue protein attached to proteins as an intracellular targeting signal).. Functionally, hydrolase that can remove conjugated ubiquitin from proteins in vitro and may therefore play an important regulatory role at the level of protein turnover by preventing degradation. The chain is Putative OVARIAN TUMOR DOMAIN-containing deubiquitinating enzyme 8 from Arabidopsis thaliana (Mouse-ear cress).